Reading from the N-terminus, the 347-residue chain is Beta-hexosaminidase (347 aa).

Substrate contacts are provided by residues Asp64, Arg72, Arg138, and 168-169 (KH). The active-site Proton donor/acceptor is the His181. Asp251 functions as the Nucleophile in the catalytic mechanism.

It belongs to the glycosyl hydrolase 3 family. NagZ subfamily.

The protein resides in the cytoplasm. It catalyses the reaction Hydrolysis of terminal non-reducing N-acetyl-D-hexosamine residues in N-acetyl-beta-D-hexosaminides.. The protein operates within cell wall biogenesis; peptidoglycan recycling. In terms of biological role, plays a role in peptidoglycan recycling by cleaving the terminal beta-1,4-linked N-acetylglucosamine (GlcNAc) from peptide-linked peptidoglycan fragments, giving rise to free GlcNAc, anhydro-N-acetylmuramic acid and anhydro-N-acetylmuramic acid-linked peptides. This chain is Beta-hexosaminidase, found in Thioalkalivibrio sulfidiphilus (strain HL-EbGR7).